The primary structure comprises 499 residues: Probable alpha-L-arabinofuranosidase B (499 aa).

An N-terminal signal peptide occupies residues methionine 1–alanine 18. The segment at glycine 19 to serine 335 is catalytic. Intrachain disulfides connect cysteine 21-cysteine 31, cysteine 81-cysteine 86, and cysteine 176-cysteine 177. Residue asparagine 83 is glycosylated (N-linked (GlcNAc...) asparagine). N-linked (GlcNAc...) asparagine glycosylation is present at asparagine 202. A substrate-binding site is contributed by aspartate 219. Glutamate 221 serves as the catalytic Nucleophile. Substrate-binding residues include asparagine 222, asparagine 223, and glycine 296. Catalysis depends on aspartate 297, which acts as the Proton donor. The segment at glycine 336–serine 499 is ABD. Cysteine 401 and cysteine 439 form a disulfide bridge. Residues histidine 416, asparagine 418, phenylalanine 419, aspartate 435, histidine 463, aspartate 465, leucine 468, and aspartate 488 each coordinate substrate.

It belongs to the glycosyl hydrolase 54 family.

The protein localises to the secreted. The enzyme catalyses Hydrolysis of terminal non-reducing alpha-L-arabinofuranoside residues in alpha-L-arabinosides.. Its pathway is glycan metabolism; L-arabinan degradation. Functionally, alpha-L-arabinofuranosidase involved in the degradation of arabinoxylan, a major component of plant hemicellulose. Able to hydrolyze 1,5-, 1,3- and 1,2-alpha-linkages not only in L-arabinofuranosyl oligosaccharides, but also in polysaccharides containing terminal non-reducing L-arabinofuranoses in side chains, like L-arabinan, arabinogalactan and arabinoxylan. The sequence is that of Probable alpha-L-arabinofuranosidase B (abfB) from Aspergillus niger (strain ATCC MYA-4892 / CBS 513.88 / FGSC A1513).